We begin with the raw amino-acid sequence, 331 residues long: Isopenicillin N synthase (331 aa).

Isopenicillin N contacts are provided by Arg87, Tyr91, Ser183, and Tyr189. The N-[(5S)-5-amino-5-carboxypentanoyl]-L-cysteinyl-D-valine site is built by Arg87, Tyr91, Ser183, Tyr189, His214, and Asp216. Residues 176 to 288 (KPDDTLASVV…RQSLPFFVNL (113 aa)) form the Fe2OG dioxygenase domain. Fe(2+) is bound by residues His214, Asp216, and His270. Position 279 (Arg279) interacts with 2-oxoglutarate. Residue Ser281 participates in isopenicillin N binding. Ser281 is a binding site for N-[(5S)-5-amino-5-carboxypentanoyl]-L-cysteinyl-D-valine.

It belongs to the iron/ascorbate-dependent oxidoreductase family. In terms of assembly, monomer. Fe(2+) is required as a cofactor.

It localises to the cytoplasm. The protein resides in the cytosol. It catalyses the reaction N-[(5S)-5-amino-5-carboxypentanoyl]-L-cysteinyl-D-valine + O2 = isopenicillin N + 2 H2O. It functions in the pathway antibiotic biosynthesis; penicillin G biosynthesis; penicillin G from L-alpha-aminoadipate and L-cysteine and L-valine: step 2/3. In terms of biological role, isopenicillin N synthase; part of the gene cluster that mediates the biosynthesis of penicillin, the world's most important antibiotic. IpnA catalyzes the cyclization of the tripeptide N-[(5S)-5-amino-5-carboxypentanoyl]-L-cysteinyl-D-valine (LLD-ACV or ACV) to form isopenicillin N (IPN) that contains the beta-lactam nucleus. The penicillin biosynthesis occurs via 3 enzymatic steps, the first corresponding to the production of the tripeptide N-[(5S)-5-amino-5-carboxypentanoyl]-L-cysteinyl-D-valine (LLD-ACV or ACV) by the NRPS acvA. The tripeptide ACV is then cyclized to isopenicillin N (IPN) by the isopenicillin N synthase ipnA that forms the beta-lactam nucleus. Finally, the alpha-aminoadipyl side chain is exchanged for phenylacetic acid by the isopenicillin N acyltransferase penDE to yield penicillin in the peroxisomal matrix. This Emericella nidulans (strain FGSC A4 / ATCC 38163 / CBS 112.46 / NRRL 194 / M139) (Aspergillus nidulans) protein is Isopenicillin N synthase.